A 254-amino-acid chain; its full sequence is MTGCTTPGDALLSFEPLEEGVLIKRYKRFLADVELSSGEVITAHCANTGPMTGVLIPGQRVRLRHAPSPKRKLAWTWEQAEVPGADGAPCWVGINTALPNRLIRATIEAGCLAAQLGPIASIRAEVAYGANKRSRIDLLLTPTDSNPDQRPIYLEVKNTTWTDGTTALFPDTVTERGQKHLVELMGVLPDSRAVLVPCLSRPDVTEFAPGDSADPRYGELFREAIKAGVEVLPCRFRFQADGIRWEGIRPLKQL.

This sequence belongs to the SfsA family.

This is Sugar fermentation stimulation protein homolog from Parasynechococcus marenigrum (strain WH8102).